A 370-amino-acid chain; its full sequence is MHCESPIKRRLSRKIWVGSVPVGGDAPIAVQSMTNTDTNDVAATVAQIRRLEDAGADIVRVSVPDMDAAEAFGRIKQQVRVPLVADIHFDYQIALRVAELGVDCLRINPGNIGREDRVKAVVEAARDKGIPIRIGVNAGSLEKDLQKKYGEPTPAALVESALRHVEHLDRLNFPDFKVSVKASDVFMAVEAYRLLAKQIEQPLHLGITEAGGLRSGTVKSAVGLGMLLAEGIGDTIRISLAADPVEEIKVGFDILKSLRLRSRGINFIACPSCSRQNFDVVKTMNELESRVEDLLVPLDVAVIGCVVNGPGEAKEAHIGLTGGSPNNLVYIDGKPASKLTNENLVDELEKLIRDKAAEKAAADAAVIVRS.

The [4Fe-4S] cluster site is built by C270, C273, C305, and E312.

The protein belongs to the IspG family. Requires [4Fe-4S] cluster as cofactor.

The catalysed reaction is (2E)-4-hydroxy-3-methylbut-2-enyl diphosphate + oxidized [flavodoxin] + H2O + 2 H(+) = 2-C-methyl-D-erythritol 2,4-cyclic diphosphate + reduced [flavodoxin]. Its pathway is isoprenoid biosynthesis; isopentenyl diphosphate biosynthesis via DXP pathway; isopentenyl diphosphate from 1-deoxy-D-xylulose 5-phosphate: step 5/6. Converts 2C-methyl-D-erythritol 2,4-cyclodiphosphate (ME-2,4cPP) into 1-hydroxy-2-methyl-2-(E)-butenyl 4-diphosphate. The chain is 4-hydroxy-3-methylbut-2-en-1-yl diphosphate synthase (flavodoxin) from Ectopseudomonas mendocina (strain ymp) (Pseudomonas mendocina).